The sequence spans 118 residues: DNA-binding protein Msm_0708 (118 aa).

Positions 16–39 are disordered; it reads EARQAAAQGQMQQQAQQQMQQQEA. The span at 18-39 shows a compositional bias: low complexity; sequence RQAAAQGQMQQQAQQQMQQQEA.

It belongs to the PDCD5 family.

The polypeptide is DNA-binding protein Msm_0708 (Methanobrevibacter smithii (strain ATCC 35061 / DSM 861 / OCM 144 / PS)).